Reading from the N-terminus, the 342-residue chain is Heat-inducible transcription repressor HrcA (342 aa).

The protein belongs to the HrcA family.

In terms of biological role, negative regulator of class I heat shock genes (grpE-dnaK-dnaJ and groELS operons). Prevents heat-shock induction of these operons. The polypeptide is Heat-inducible transcription repressor HrcA (Acholeplasma laidlawii).